Consider the following 277-residue polypeptide: Ubiquitin-conjugating enzyme suppressor 1 (277 aa).

Residues 254–277 (RTLACPDETNDNRGSEHYTKRKKI) are disordered.

In terms of biological role, not known; its elevated expression suppresses the conditional cell cycle defects associated with UBC3/CDC34 mutations. This Saccharomyces cerevisiae (strain ATCC 204508 / S288c) (Baker's yeast) protein is Ubiquitin-conjugating enzyme suppressor 1 (UBS1).